The chain runs to 184 residues: uncharacterized protein (184 aa).

A helical membrane pass occupies residues 5-27; it reads YLLATAMFLIVCVYVISETVNLH.

Its subcellular location is the membrane. This is an uncharacterized protein from Methanocaldococcus jannaschii (strain ATCC 43067 / DSM 2661 / JAL-1 / JCM 10045 / NBRC 100440) (Methanococcus jannaschii).